Reading from the N-terminus, the 136-residue chain is Nucleoside diphosphate kinase (136 aa).

ATP-binding residues include Lys-10, Phe-58, Arg-86, Thr-92, Arg-104, and Asn-114. His-117 serves as the catalytic Pros-phosphohistidine intermediate.

Belongs to the NDK family. As to quaternary structure, homotetramer. The cofactor is Mg(2+).

The protein resides in the cytoplasm. The enzyme catalyses a 2'-deoxyribonucleoside 5'-diphosphate + ATP = a 2'-deoxyribonucleoside 5'-triphosphate + ADP. The catalysed reaction is a ribonucleoside 5'-diphosphate + ATP = a ribonucleoside 5'-triphosphate + ADP. Major role in the synthesis of nucleoside triphosphates other than ATP. The ATP gamma phosphate is transferred to the NDP beta phosphate via a ping-pong mechanism, using a phosphorylated active-site intermediate. This Corynebacterium diphtheriae (strain ATCC 700971 / NCTC 13129 / Biotype gravis) protein is Nucleoside diphosphate kinase.